We begin with the raw amino-acid sequence, 493 residues long: Cytochrome P450 monooxygenase olcG (493 aa).

A helical transmembrane segment spans residues Gly15–Phe35. Residue Cys429 coordinates heme.

This sequence belongs to the cytochrome P450 family. Heme is required as a cofactor.

It localises to the membrane. It functions in the pathway secondary metabolite biosynthesis; terpenoid biosynthesis. In terms of biological role, cytochrome P450 monooxygenase; part of the gene cluster that mediates the biosynthesis of 15-deoxyoxalicine B. The first step of the pathway is the synthesis of nicotinyl-CoA from nicotinic acid by the nicotinic acid-CoA ligase olcI. Nicotinyl-CoA is then a substrate of polyketide synthase olcA to produce 4-hydroxy-6-(3-pyridinyl)-2H-pyran-2-one (HPPO) which is further prenylated by the polyprenyl transferase olcH to yield geranylgeranyl-HPPO. Geranylgeranyl pyrophosphate is provided by the cluster-specific geranylgeranyl pyrophosphate synthase olcC. The FAD-dependent monooxygenase olcE catalyzes the epoxidation of geranylgeranyl-HPPO and the terpene cyclase olcD catalyzes the cyclization of the terpenoid component, resulting in the formation of the tricyclic terpene moiety seen in predecaturin E. The cytochrome P450 monooxygenase then catalyzes the allylic oxidation of predecaturin E, which is followed by spirocylization with concomitant loss of one molecule of water to form decaturin E. Decaturin E is the substrate of the cytochrome P450 monooxygenase olcJ which hydroxylates it at the C-29 position to form decaturin F. The short-chain dehydrogenase/reductase olcF may catalyze the oxidation of decaturin F to generate the 29-hydroxyl-27-one intermediate, and subsequent hemiacetal formation probably leads to the formation of decaturin C. The dioxygenase olcK may be a peroxisomal enzyme that catalyzes the hydroxylation of decaturin C into decaturin A once decaturin C is shuttled into the peroxisome by the MFS transporter olcL. Finally the cytochrome P450 monooxygenase olcB catalyzes the oxidative rearrangement to yield 15-deoxyoxalicine B. In the absence of olcJ, decaturin E may be shunted to a pathway in which it is oxidized to a ketone, possibly by olcF, to form decaturin D, which undergoes further allylic oxidation to yield decaturin G. Moreover, in the absence of oclK or oclL, oclB can convert decaturin C into 15-deoxyoxalicine A. This is Cytochrome P450 monooxygenase olcG from Penicillium canescens.